Consider the following 1594-residue polypeptide: Calpain-D (1594 aa).

2 RanBP2-type zinc fingers span residues 1–35 and 135–164; these read MGTI…VRKV and LNRR…VSYL. Disordered stretches follow at residues 210–256, 371–400, 420–459, 524–543, and 554–606; these read EEQH…TAID, EPQQ…NPTQ, ASSS…SSSG, KKKQ…GSGE, and AGLG…RLSG. Over residues 215–229 the composition is skewed to basic residues; sequence HQLHSQHLHKRHLKG. Composition is skewed to polar residues over residues 246–255 and 371–385; these read RRTQSLSTAI and EPQQ…QLQR. Ser250 carries the post-translational modification Phosphoserine. The span at 438–459 shows a compositional bias: low complexity; sequence NSNSNSSGNSNIINNNSSSSSG. Polar residues predominate over residues 528-541; that stretch reads QIASESQTNNNTGS. Residues 643 to 673 form a RanBP2-type 3 zinc finger; that stretch reads RSKMWICIKCSYAYNRLWLQTCEMCEAKAEQ. A disordered region spans residues 684–703; the sequence is QQQQQQHHHHHLQQQQAEAP. 2 RanBP2-type zinc fingers span residues 704–733 and 744–774; these read RDEP…SKLK and RKGE…HRQP. Disordered stretches follow at residues 786–811 and 860–884; these read RPDG…HQSG and SLQQ…GSIV. The span at 860–871 shows a compositional bias: polar residues; the sequence is SLQQQRNSSSSG. The RanBP2-type 6 zinc-finger motif lies at 927–956; sequence STKKWQCPACTYDNCAASVVCDICSSPRGL. Positions 1014–1321 constitute a Calpain catalytic domain; the sequence is LFVDDSFPPA…FDCIDICKVR (308 aa). Residues Cys1079, His1245, and Asn1265 contribute to the active site.

This sequence belongs to the peptidase C2 family.

Functionally, has a role in eye development. Its function is as follows. Calcium-regulated non-lysosomal thiol-protease. The chain is Calpain-D (sol) from Drosophila melanogaster (Fruit fly).